The chain runs to 480 residues: 2-succinylbenzoate--CoA ligase (480 aa).

This sequence belongs to the ATP-dependent AMP-binding enzyme family. MenE subfamily.

The catalysed reaction is 2-succinylbenzoate + ATP + CoA = 2-succinylbenzoyl-CoA + AMP + diphosphate. It participates in quinol/quinone metabolism; 1,4-dihydroxy-2-naphthoate biosynthesis; 1,4-dihydroxy-2-naphthoate from chorismate: step 5/7. The protein operates within quinol/quinone metabolism; menaquinone biosynthesis. Converts 2-succinylbenzoate (OSB) to 2-succinylbenzoyl-CoA (OSB-CoA). In Oceanobacillus iheyensis (strain DSM 14371 / CIP 107618 / JCM 11309 / KCTC 3954 / HTE831), this protein is 2-succinylbenzoate--CoA ligase.